Reading from the N-terminus, the 600-residue chain is Na(+)/dicarboxylate cotransporter 3 (600 aa).

The Cytoplasmic portion of the chain corresponds to 1 to 16 (MAALAALAKKVWSARR). Residues 17-37 (LLVLLLVPLALLPILFALPPK) form a helical membrane-spanning segment. Topologically, residues 38 to 55 (EGRCLYVILLMAVYWCTE) are extracellular. Residues 56–76 (ALPLSVTALLPIILFPFMGIL) traverse the membrane as a helical segment. At 77-82 (PSSKVC) the chain is on the cytoplasmic side. The chain crosses the membrane as a helical span at residues 83 to 103 (PQYFLDTNFLFLSGLIMASAI). Topologically, residues 104 to 137 (EEWNLHRRIALKVLMLVGVQPARLILGMMVTTSF) are extracellular. A helical transmembrane segment spans residues 138–158 (LSMWLSNTASTAMMLPIASAI). Residues 159-229 (LKSLFGQREA…KEEEHRRNIW (71 aa)) lie on the Cytoplasmic side of the membrane. A helical transmembrane segment spans residues 230–250 (KGFLISIPYSASIGGTATLTG). The Extracellular portion of the chain corresponds to 251–278 (TAPNLILLGQLKSFFPQCDVVNFGSWFI). The helical transmembrane segment at 279–299 (FAFPLMLLFLLVGWLWISFLY) threads the bilayer. At 300–336 (GGMSWRSWRKKKSKIRADAEDQAKAVIQEEFQNLGPI) the chain is on the cytoplasmic side. A helical transmembrane segment spans residues 337-357 (KFAEQAVFILFCTFAILLFSR). Residues 358–372 (DPKFIPGWASLFAPG) lie on the Extracellular side of the membrane. A helical transmembrane segment spans residues 373-393 (FVSDAVTGVAIVTILFFFPSQ). Residues 394-422 (KPSLKWWFDFKAPNSETEPLLSWKKAQET) are Cytoplasmic-facing. An intramembrane region (helical) is located at residues 423–443 (VPWNIILLLGGGFAMAKGCEE). Residues 444–461 (SGLSAWIGGQLHPLEHVP) are Cytoplasmic-facing. A helical membrane pass occupies residues 462-482 (PLLAVLLITVVIAFFTEFASN). Residues 483 to 505 (TATIIIFLPVLAELAIRLHVHPL) are Extracellular-facing. The chain crosses the membrane as a helical span at residues 506-526 (YLMIPGTVGCSYAFMLPVSTP). Residues 527–546 (PNSIAFSTGHLLVKDMVRTG) are Cytoplasmic-facing. The chain crosses the membrane as a helical span at residues 547-567 (LLMNLMGVLLLSLAMNTWAQT). The Extracellular portion of the chain corresponds to 568–600 (IFQLGTFPDWANTHAANATALPPALTNNTVQTF). 2 N-linked (GlcNAc...) asparagine glycosylation sites follow: asparagine 584 and asparagine 594.

It belongs to the SLC13A/DASS transporter (TC 2.A.47) family. NADC subfamily. As to expression, highly expressed in kidney, and at much lower levels in brain.

It is found in the cell membrane. The enzyme catalyses succinate(out) + 3 Na(+)(out) = succinate(in) + 3 Na(+)(in). It carries out the reaction 2-oxoglutarate(out) + 3 Na(+)(out) = 2-oxoglutarate(in) + 3 Na(+)(in). It catalyses the reaction N-acetyl-L-aspartate(out) + 3 Na(+)(out) = N-acetyl-L-aspartate(in) + 3 Na(+)(in). The catalysed reaction is fumarate(out) + 3 Na(+)(out) = fumarate(in) + 3 Na(+)(in). The enzyme catalyses glutarate(out) + 3 Na(+)(out) = glutarate(in) + 3 Na(+)(in). It carries out the reaction 2,2-dimethylsuccinate(out) + 3 Na(+)(out) = 2,2-dimethylsuccinate(in) + 3 Na(+)(in). It catalyses the reaction 2,3-dimethylsuccinate(out) + 3 Na(+)(out) = 2,3-dimethylsuccinate(in) + 3 Na(+)(in). The catalysed reaction is malate(out) + 3 Na(+)(out) = malate(in) + 3 Na(+)(in). The enzyme catalyses itaconate(out) + 3 Na(+)(out) = itaconate(in) + 3 Na(+)(in). In terms of biological role, high-affinity sodium-dicarboxylate cotransporter that accepts a range of substrates with 4-6 carbon atoms, such as the citric acid cycle intermediates succinate and alpha-ketoglutarate (2-oxoglutarate), as well as other compounds including N-acetyl-L-aspartate. Transports the dicarboxylate into the cell with a probable stoichiometry of 3 Na(+) for 1 divalent dicarboxylate, rendering the process electrogenic. Can transport citrate in a Na(+)-dependent manner, recognizing the divalent form of citrate rather than the trivalent form which is normally found in blood. Imports itaconate in hepatocytes leading to activation of TFEB-dependent lysosomal biogenesis involved in antibacterial innate immune response. This Mus musculus (Mouse) protein is Na(+)/dicarboxylate cotransporter 3 (Slc13a3).